A 99-amino-acid chain; its full sequence is Acylphosphatase-1 (99 aa).

An N-acetylalanine modification is found at alanine 2. Residues 9-99 form the Acylphosphatase-like domain; sequence SVDYEIFGKV…LDYSDFQIVK (91 aa). Catalysis depends on residues arginine 24 and asparagine 42.

This sequence belongs to the acylphosphatase family. In terms of tissue distribution, organ-common type isozyme is found in many different tissues.

The catalysed reaction is an acyl phosphate + H2O = a carboxylate + phosphate + H(+). This chain is Acylphosphatase-1 (ACYP1), found in Homo sapiens (Human).